We begin with the raw amino-acid sequence, 367 residues long: MASNSFGHLFKMTTWGESHGKAMGVVIDGCPSGIFLTEQDINQELYWRKPGRNELTSPRLEEDQVEILSGLFNGQTTGAPISLIIWNKDVNSSAYEGMHTLFRPGHANYTYSNKYGIFDYRGGGRASARETVCRVAAGAIAKKILSDVGISVVAYLYSIGEIEGKIELSDHVNNVPLLQQTIRNSSLFSPSPAAEKMKGVLEEARKEGDSVGGIVEAMAFNVPCGWGDPVYEKLEANLAKAMLSIPASKGFEIGEGFKASQMRGTEHNDLFGIQNDQISFVTNHAGGTLGGISTGEPIIIKVPFKPTSSINKVQTSLNEKGEICDYRLPTGSRHDPCVAIRAVPVVEAMMALVLVDAFLMSKFCQLN.

Position 48 (R48) interacts with NADP(+). Residues 125-127, G290, 305-309, and R333 contribute to the FMN site; these read RAS and KPTSS.

It belongs to the chorismate synthase family. In terms of assembly, homotetramer. The cofactor is FMNH2.

It carries out the reaction 5-O-(1-carboxyvinyl)-3-phosphoshikimate = chorismate + phosphate. The protein operates within metabolic intermediate biosynthesis; chorismate biosynthesis; chorismate from D-erythrose 4-phosphate and phosphoenolpyruvate: step 7/7. Functionally, catalyzes the anti-1,4-elimination of the C-3 phosphate and the C-6 proR hydrogen from 5-enolpyruvylshikimate-3-phosphate (EPSP) to yield chorismate, which is the branch point compound that serves as the starting substrate for the three terminal pathways of aromatic amino acid biosynthesis. This reaction introduces a second double bond into the aromatic ring system. The chain is Chorismate synthase from Protochlamydia amoebophila (strain UWE25).